We begin with the raw amino-acid sequence, 37 residues long: Natriuretic peptide PNP (37 aa).

Cys14 and Cys30 are oxidised to a cystine.

As to expression, expressed by the venom gland.

The protein localises to the secreted. Its function is as follows. Increases urine flow and decreases blood pressure when administered to rats by intravenous injection. Inhibits thrombin-induced platelet aggregation. Stimulates cGMP production via the natriuretic peptide receptor-A (NPR1). This is Natriuretic peptide PNP from Pseudocerastes persicus (Persian horned viper).